An 89-amino-acid polypeptide reads, in one-letter code: Exodeoxyribonuclease 7 small subunit (89 aa).

Residues 1 to 22 (MRKKSSSNKEETALHPPPENFE) are disordered.

This sequence belongs to the XseB family. As to quaternary structure, heterooligomer composed of large and small subunits.

The protein localises to the cytoplasm. The catalysed reaction is Exonucleolytic cleavage in either 5'- to 3'- or 3'- to 5'-direction to yield nucleoside 5'-phosphates.. Functionally, bidirectionally degrades single-stranded DNA into large acid-insoluble oligonucleotides, which are then degraded further into small acid-soluble oligonucleotides. The chain is Exodeoxyribonuclease 7 small subunit from Nitrosomonas europaea (strain ATCC 19718 / CIP 103999 / KCTC 2705 / NBRC 14298).